We begin with the raw amino-acid sequence, 179 residues long: Inosine/xanthosine triphosphatase (179 aa).

Mg(2+) is bound at residue Glu-71. 71 to 72 is a substrate binding site; the sequence is EA.

It belongs to the YjjX NTPase family. Homodimer. It depends on Mg(2+) as a cofactor. Mn(2+) is required as a cofactor.

It carries out the reaction XTP + H2O = XDP + phosphate + H(+). The enzyme catalyses ITP + H2O = IDP + phosphate + H(+). Functionally, phosphatase that hydrolyzes non-canonical purine nucleotides such as XTP and ITP to their respective diphosphate derivatives. Probably excludes non-canonical purines from DNA/RNA precursor pool, thus preventing their incorporation into DNA/RNA and avoiding chromosomal lesions. In Shewanella sp. (strain ANA-3), this protein is Inosine/xanthosine triphosphatase.